The sequence spans 275 residues: Large ribosomal subunit protein uL2 (275 aa).

Residues 223-275 are disordered; the sequence is VVMNPVDHPHGGGEGKSSGGRHPVSPWGMPTKGYKTRKNKGTDQYIVRRRNKK.

Belongs to the universal ribosomal protein uL2 family. As to quaternary structure, part of the 50S ribosomal subunit. Forms a bridge to the 30S subunit in the 70S ribosome.

In terms of biological role, one of the primary rRNA binding proteins. Required for association of the 30S and 50S subunits to form the 70S ribosome, for tRNA binding and peptide bond formation. It has been suggested to have peptidyltransferase activity; this is somewhat controversial. Makes several contacts with the 16S rRNA in the 70S ribosome. This Psychromonas ingrahamii (strain DSM 17664 / CCUG 51855 / 37) protein is Large ribosomal subunit protein uL2.